The sequence spans 130 residues: MALTFPAELRYADSHEYAGPSDEGIKVGISAFAVDQLGDIVFVELPEVGASIEKGSSFGTVESVKAVEEMYAPVSGTVVAANQAVIDTPELLQNDPYQEGWLLKITPADPSQMEQLMDATSYSAKVEGGS.

The Lipoyl-binding domain maps to 24-106 (GIKVGISAFA…YQEGWLLKIT (83 aa)). N6-lipoyllysine is present on K65.

The protein belongs to the GcvH family. As to quaternary structure, the glycine cleavage system is composed of four proteins: P, T, L and H. The cofactor is (R)-lipoate.

The glycine cleavage system catalyzes the degradation of glycine. The H protein shuttles the methylamine group of glycine from the P protein to the T protein. In Synechococcus sp. (strain RCC307), this protein is Glycine cleavage system H protein.